A 96-amino-acid chain; its full sequence is Gastrolith matrix protein (96 aa).

9 consecutive repeat copies span residues G11–F15, G16–F20, G21–F25, G30–F34, G35–F39, G50–F54, G55–F59, G65–F69, and G70–F74. The 9 X 5 AA tandem repeat of G-S-X-X-F stretch occupies residues G11–F74. Positions G75–R96 are disordered.

Post-translationally, the N-terminus is blocked. In terms of tissue distribution, expressed in the gastroliths.

The protein resides in the secreted. In terms of biological role, associates with chitin and plays a role in calcification. The sequence is that of Gastrolith matrix protein from Procambarus clarkii (Red swamp crayfish).